The primary structure comprises 280 residues: Mesaconyl-C(4)-CoA hydratase (280 aa).

Belongs to the HTD2 family. Homodimer.

The enzyme catalyses (3S)-citramalyl-CoA = 3-methylfumaryl-CoA + H2O. Inhibited by 3-methylfumaryl-CoA concentrations above 0.3 mM. Functionally, involved in the glyoxylate assimilation cycle used to regenerate acetyl-CoA and produce pyruvate as universal precursor for biosynthesis. Catalyzes the hydration of 3-methylfumaryl-CoA (mesaconyl-C4-CoA) to (3S)-citramalyl-CoA. The polypeptide is Mesaconyl-C(4)-CoA hydratase (meh) (Chloroflexus aurantiacus (strain ATCC 29366 / DSM 635 / J-10-fl)).